Consider the following 207-residue polypeptide: Cytochrome c biogenesis ATP-binding export protein CcmA (207 aa).

Positions 4–207 (LEARELLCER…RISLTQTRAA (204 aa)) constitute an ABC transporter domain. 36 to 43 (GSNGAGKT) contributes to the ATP binding site.

This sequence belongs to the ABC transporter superfamily. CcmA exporter (TC 3.A.1.107) family. As to quaternary structure, the complex is composed of two ATP-binding proteins (CcmA) and two transmembrane proteins (CcmB).

It is found in the cell inner membrane. It carries out the reaction heme b(in) + ATP + H2O = heme b(out) + ADP + phosphate + H(+). Part of the ABC transporter complex CcmAB involved in the biogenesis of c-type cytochromes; once thought to export heme, this seems not to be the case, but its exact role is uncertain. Responsible for energy coupling to the transport system. This chain is Cytochrome c biogenesis ATP-binding export protein CcmA, found in Shigella flexneri.